The sequence spans 379 residues: Type II methyltransferase M.SsoII (379 aa).

Positions 9–66 (IKEKRERLHMTQKEFADALGLSKYGDRTIRRWERGETKPTGAELKAVIDFPDTPPYPN) constitute an HTH cro/C1-type domain. Residues 72–379 (YRMIDLFAGI…AEKIISTLDS (308 aa)) enclose the SAM-dependent MTase C5-type domain. Cys142 is a catalytic residue.

This sequence belongs to the class I-like SAM-binding methyltransferase superfamily. C5-methyltransferase family.

The catalysed reaction is a 2'-deoxycytidine in DNA + S-adenosyl-L-methionine = a 5-methyl-2'-deoxycytidine in DNA + S-adenosyl-L-homocysteine + H(+). Its function is as follows. A methylase that recognizes the double-stranded sequence 5'-CCNGG-3', methylates C-2 on both strands, and protects the DNA from cleavage by the SsoII endonuclease. The sequence is that of Type II methyltransferase M.SsoII (ssoIIM) from Shigella sonnei.